Reading from the N-terminus, the 593-residue chain is Aspartate--tRNA ligase (593 aa).

E180 lines the L-aspartate pocket. Positions 204 to 207 (QIFK) are aspartate. An L-aspartate-binding site is contributed by R226. ATP is bound by residues 226 to 228 (RDE) and Q235. H453 is an L-aspartate binding site. ATP is bound at residue E487. Residue R494 participates in L-aspartate binding. 539-542 (GLDR) serves as a coordination point for ATP.

It belongs to the class-II aminoacyl-tRNA synthetase family. Type 1 subfamily. In terms of assembly, homodimer.

It is found in the cytoplasm. The catalysed reaction is tRNA(Asp) + L-aspartate + ATP = L-aspartyl-tRNA(Asp) + AMP + diphosphate. Functionally, catalyzes the attachment of L-aspartate to tRNA(Asp) in a two-step reaction: L-aspartate is first activated by ATP to form Asp-AMP and then transferred to the acceptor end of tRNA(Asp). This Clostridium botulinum (strain Okra / Type B1) protein is Aspartate--tRNA ligase.